A 528-amino-acid chain; its full sequence is Phosphoenolpyruvate carboxykinase (ATP) (528 aa).

Substrate is bound by residues Arg56, Tyr192, and Lys198. Residues Lys198, His217, and 233-241 each bind ATP; that span reads GLSGTGKTT. Mn(2+) contacts are provided by Lys198 and His217. Asp254 lines the Mn(2+) pocket. ATP-binding residues include Glu282, Arg319, and Thr444. Arg319 serves as a coordination point for substrate.

This sequence belongs to the phosphoenolpyruvate carboxykinase (ATP) family. Requires Mn(2+) as cofactor.

It is found in the cytoplasm. The enzyme catalyses oxaloacetate + ATP = phosphoenolpyruvate + ADP + CO2. It participates in carbohydrate biosynthesis; gluconeogenesis. Functionally, involved in the gluconeogenesis. Catalyzes the conversion of oxaloacetate (OAA) to phosphoenolpyruvate (PEP) through direct phosphoryl transfer between the nucleoside triphosphate and OAA. This Bacillus cereus (strain ATCC 10987 / NRS 248) protein is Phosphoenolpyruvate carboxykinase (ATP).